Here is a 198-residue protein sequence, read N- to C-terminus: MFNPRHPGGEFFGRKHHRRHAPDGRSSSSSSSSSECELGYDERRCCRQEPDAHCCDREHRKFWKHPPEFPHFGKCKGRHALPFPRMEHWPGPKHCPFLSEKDMKDLPVTVHHGCMPIVAHGVVMFHIVSETKPSITISNTGAIKVEANGIQLLSASLKEKYPVDKVVASYANKIATIRIPCDAAFSESPVDIPITIQK.

The interval methionine 1–cysteine 36 is disordered.

This chain is Protein C4 (C4), found in Giardia intestinalis (Giardia lamblia).